The primary structure comprises 130 residues: Cholecystokinin (130 aa).

The signal sequence occupies residues 1–20 (MYSGICICVFLAVLSASSFG). The propeptide occupies 21–48 (QQTAGSHNGNPLAAELEQSLTEHHRHVR). The segment at 40–59 (LTEHHRHVRAPSSAGPLKPV) is disordered. Tyr112 carries the sulfotyrosine modification. Phe118 is subject to Phenylalanine amide. Residues 122 to 130 (SAEEYEYSS) constitute a propeptide that is removed on maturation. Sulfotyrosine is present on residues Tyr126 and Tyr128.

The protein belongs to the gastrin/cholecystokinin family. In terms of processing, the precursor is cleaved by proteases to produce a number of active cholecystokinins. As to expression, highly concentrated in the duodenum. Also localized in more distal parts of the small intestine.

It is found in the secreted. Its function is as follows. This peptide hormone induces gall bladder contraction and the release of pancreatic enzymes in the gut. Its function in the brain is not clear. The sequence is that of Cholecystokinin (CCK) from Struthio camelus (Common ostrich).